Consider the following 257-residue polypeptide: Pyridoxine 5'-phosphate synthase (257 aa).

Asn6 contacts 3-amino-2-oxopropyl phosphate. Residue 8–9 coordinates 1-deoxy-D-xylulose 5-phosphate; the sequence is DH. Arg17 serves as a coordination point for 3-amino-2-oxopropyl phosphate. His41 acts as the Proton acceptor in catalysis. Residues Arg43 and His48 each contribute to the 1-deoxy-D-xylulose 5-phosphate site. The Proton acceptor role is filled by Glu68. Thr98 serves as a coordination point for 1-deoxy-D-xylulose 5-phosphate. His210 acts as the Proton donor in catalysis. 3-amino-2-oxopropyl phosphate is bound by residues Gly211 and 232-233; that span reads GQ.

The protein belongs to the PNP synthase family. In terms of assembly, homooctamer; tetramer of dimers.

Its subcellular location is the cytoplasm. The catalysed reaction is 3-amino-2-oxopropyl phosphate + 1-deoxy-D-xylulose 5-phosphate = pyridoxine 5'-phosphate + phosphate + 2 H2O + H(+). Its pathway is cofactor biosynthesis; pyridoxine 5'-phosphate biosynthesis; pyridoxine 5'-phosphate from D-erythrose 4-phosphate: step 5/5. Functionally, catalyzes the complicated ring closure reaction between the two acyclic compounds 1-deoxy-D-xylulose-5-phosphate (DXP) and 3-amino-2-oxopropyl phosphate (1-amino-acetone-3-phosphate or AAP) to form pyridoxine 5'-phosphate (PNP) and inorganic phosphate. This is Pyridoxine 5'-phosphate synthase from Campylobacter jejuni subsp. jejuni serotype O:2 (strain ATCC 700819 / NCTC 11168).